Reading from the N-terminus, the 62-residue chain is UPF0434 protein NGR_c31900 (62 aa).

Belongs to the UPF0434 family.

This is UPF0434 protein NGR_c31900 from Sinorhizobium fredii (strain NBRC 101917 / NGR234).